The chain runs to 345 residues: Phosphoribosylformylglycinamidine cyclo-ligase (345 aa).

The protein belongs to the AIR synthase family.

It localises to the cytoplasm. It catalyses the reaction 2-formamido-N(1)-(5-O-phospho-beta-D-ribosyl)acetamidine + ATP = 5-amino-1-(5-phospho-beta-D-ribosyl)imidazole + ADP + phosphate + H(+). The protein operates within purine metabolism; IMP biosynthesis via de novo pathway; 5-amino-1-(5-phospho-D-ribosyl)imidazole from N(2)-formyl-N(1)-(5-phospho-D-ribosyl)glycinamide: step 2/2. This chain is Phosphoribosylformylglycinamidine cyclo-ligase, found in Tolumonas auensis (strain DSM 9187 / NBRC 110442 / TA 4).